Reading from the N-terminus, the 540-residue chain is Chaperonin GroEL 2 (540 aa).

ATP-binding positions include 29–32 (TLGP), 86–90 (DGTTT), Gly-413, 476–478 (NAA), and Asp-492.

It belongs to the chaperonin (HSP60) family. As to quaternary structure, forms a cylinder of 14 subunits composed of two heptameric rings stacked back-to-back. Interacts with the co-chaperonin GroES.

The protein resides in the cytoplasm. It carries out the reaction ATP + H2O + a folded polypeptide = ADP + phosphate + an unfolded polypeptide.. Functionally, together with its co-chaperonin GroES, plays an essential role in assisting protein folding. The GroEL-GroES system forms a nano-cage that allows encapsulation of the non-native substrate proteins and provides a physical environment optimized to promote and accelerate protein folding. This chain is Chaperonin GroEL 2, found in Streptomyces albus G.